We begin with the raw amino-acid sequence, 509 residues long: Serine/threonine protein kinase OSK4 (509 aa).

A Protein kinase domain is found at 17 to 269 (YNLGRTLGIG…IREIREHQWF (253 aa)). ATP is bound by residues 23-31 (LGIGSFGKV) and Lys-46. The active-site Proton acceptor is Asp-140. Residues 290–330 (MIDEDTLQDVVNLGYEKDHVCESLRNRLQNEATVAYYLLLD) enclose the UBA domain. One can recognise a KA1 domain in the interval 460-508 (NGRLPAVIKFEIQLYKSRDEKYLLDMQRVTGPQLLFLDFCAAFLTKLRV).

The protein belongs to the protein kinase superfamily. Ser/Thr protein kinase family. Interacts with HDR1. As to expression, strongly expressed in immature seeds. Mostly expressed in panicles, leaf sheaths and roots, and to a lower extent, in germinating seeds and leaf blades.

It localises to the nucleus. It carries out the reaction L-seryl-[protein] + ATP = O-phospho-L-seryl-[protein] + ADP + H(+). The enzyme catalyses L-threonyl-[protein] + ATP = O-phospho-L-threonyl-[protein] + ADP + H(+). In terms of biological role, suppressor of flowering in long days (LD) via the that up-regulation of HD1 and the down-regulation of EHD1. Can phosphorylate HD1 in the presence of HDR1. The protein is Serine/threonine protein kinase OSK4 of Oryza sativa subsp. indica (Rice).